The following is a 344-amino-acid chain: Protein L-Myc-1-A (344 aa).

2 disordered regions span residues 100–162 (RLTT…DDEI) and 209–261 (PPEP…EDIV). 3 stretches are compositionally biased toward polar residues: residues 102 to 112 (TTASPRATNPQ), 123 to 133 (PGVNSIEQNAN), and 236 to 255 (PALQQCSSPMPGSPLASGSS). Positions 261-313 (VKKKNHNYLERKRRNDLRSRFLALREEVPSLTRSTKTPKVVVLSKATEFLKGL) constitute a bHLH domain. Residues 313–341 (LVIQEQQLTAEKFKLWSRHQQLLRRISHL) are leucine-zipper.

In terms of assembly, efficient DNA binding requires dimerization with another bHLH protein. Binds DNA as a heterodimer with MAX. As to expression, high levels in oocytes, modest levels in kidney and low levels in spleen.

The protein localises to the nucleus. The chain is Protein L-Myc-1-A (mycl1-a) from Xenopus laevis (African clawed frog).